The chain runs to 90 residues: Small ribosomal subunit protein uS19 (90 aa).

Belongs to the universal ribosomal protein uS19 family.

Its function is as follows. Protein S19 forms a complex with S13 that binds strongly to the 16S ribosomal RNA. The polypeptide is Small ribosomal subunit protein uS19 (Nitrosococcus oceani (strain ATCC 19707 / BCRC 17464 / JCM 30415 / NCIMB 11848 / C-107)).